Reading from the N-terminus, the 384-residue chain is Outer membrane protein assembly factor BamB (384 aa).

The first 21 residues, Met1–Ala21, serve as a signal peptide directing secretion. Cys22 carries N-palmitoyl cysteine lipidation. Cys22 carries S-diacylglycerol cysteine lipidation.

It belongs to the BamB family. In terms of assembly, part of the Bam complex.

It localises to the cell outer membrane. Its function is as follows. Part of the outer membrane protein assembly complex, which is involved in assembly and insertion of beta-barrel proteins into the outer membrane. The sequence is that of Outer membrane protein assembly factor BamB from Taylorella asinigenitalis (strain MCE3).